We begin with the raw amino-acid sequence, 342 residues long: Glucan endo-1,3-beta-glucosidase (342 aa).

A signal peptide spans 1–26; it reads MLASSPMLLFLLSLLMAYNFDTTAGQ. Residue Glu-119 is the Proton donor of the active site. Glu-261 (nucleophile) is an active-site residue.

This sequence belongs to the glycosyl hydrolase 17 family. Post-translationally, the N-terminus is blocked.

Its subcellular location is the vacuole. It carries out the reaction Hydrolysis of (1-&gt;3)-beta-D-glucosidic linkages in (1-&gt;3)-beta-D-glucans.. Is thought to be an important plant defense-related product against fungal pathogens. Accumulation of the glucanase can be detected as early as 4 hours after inoculation. This chain is Glucan endo-1,3-beta-glucosidase (BGL), found in Brassica campestris (Field mustard).